Reading from the N-terminus, the 602-residue chain is Type 2 DNA topoisomerase 6 subunit B (602 aa).

ATP contacts are provided by residues N40, D71, 92–93 (SR), 102–109 (GQQGIGIS), and K425.

This sequence belongs to the TOP6B family. In terms of assembly, homodimer. Heterotetramer of two Top6A and two Top6B chains.

It carries out the reaction ATP-dependent breakage, passage and rejoining of double-stranded DNA.. Relaxes both positive and negative superturns and exhibits a strong decatenase activity. The polypeptide is Type 2 DNA topoisomerase 6 subunit B (Archaeoglobus fulgidus (strain ATCC 49558 / DSM 4304 / JCM 9628 / NBRC 100126 / VC-16)).